A 501-amino-acid chain; its full sequence is Mitogen-activated protein kinase MKC1 (501 aa).

One can recognise a Protein kinase domain in the interval 28–339; sequence FKIVKELGHG…VRDALNHKYL (312 aa). ATP contacts are provided by residues 34-42 and K74; that span reads LGHGAYGIV. The active-site Proton acceptor is D174. At T211 the chain carries Phosphothreonine. The TXY signature appears at 211–213; it reads TEY. Y213 bears the Phosphotyrosine mark. Residues 400–450 are disordered; it reads MQKREEQRQEEEEKELLEQQRQFPAQESMDISQTPYNNLETNIGTPQVEDD. Polar residues predominate over residues 422 to 444; sequence FPAQESMDISQTPYNNLETNIGT.

This sequence belongs to the protein kinase superfamily. CMGC Ser/Thr protein kinase family. MAP kinase subfamily. Mg(2+) serves as cofactor. Post-translationally, dually phosphorylated on Thr-211 and Tyr-213, which activates the enzyme.

The enzyme catalyses L-seryl-[protein] + ATP = O-phospho-L-seryl-[protein] + ADP + H(+). It carries out the reaction L-threonyl-[protein] + ATP = O-phospho-L-threonyl-[protein] + ADP + H(+). With respect to regulation, activated by tyrosine and threonine phosphorylation. In Candida albicans (Yeast), this protein is Mitogen-activated protein kinase MKC1 (MKC1).